A 177-amino-acid chain; its full sequence is MINITKPQNWTRGDYLVSTDPALLQVDAINAALSSDMVWWAGDLPADALWDALRSSICFGLYRKRSSEMNGTGPTVEYKIEEWEQVGLVRMITDGVTFGYLTDVYILPEHQGGGRGRWMLQILNEALQGWPHLRRVMLLTTDKMHLFGKNLGMKDYREFDGMKGVSIAMVEGPGAQH.

The 94-residue stretch at 81 to 174 (EEWEQVGLVR…VSIAMVEGPG (94 aa)) folds into the N-acetyltransferase domain.

This sequence belongs to the acetyltransferase family.

It functions in the pathway mycotoxin biosynthesis. Putative acetyltransferase; part of the gene cluster that mediates the biosynthesis of butenolide, a mycotoxin that shows antibiotic activity but does not seem to play a major role in the spread of head blight in wheat. Butenolide is derived from glutamic acid via a 4-acetamido-2-butenoic acid intermediate. The predicted function of the NADH:flavin oxidoreductase FG08077, the cytochrome P450 monooxygenase FG08079, the decarboxylase FG08083, and the putative acetyltransferase FG08082 are consistent with this pathway, however, the respective activities of the butelonide biosynthesis cluster enzymes have still to be experimentally determined. The polypeptide is Putative acetyltransferase FG08082 (Gibberella zeae (strain ATCC MYA-4620 / CBS 123657 / FGSC 9075 / NRRL 31084 / PH-1) (Wheat head blight fungus)).